A 395-amino-acid chain; its full sequence is RNA polymerase II elongation factor ELL3 (395 aa).

4 disordered regions span residues 124 to 149 (SSLQRHNRTEDARDRESWQNVGDYPE), 163 to 182 (VPDPLASSQGQSLPGSSREH), 194 to 218 (LPNRDPDQALPPSASQKHVDKKRPA), and 233 to 279 (LAPS…SLSP). The span at 130–140 (NRTEDARDRES) shows a compositional bias: basic and acidic residues. A compositionally biased stretch (polar residues) spans 168 to 177 (ASSQGQSLPG). Residues 246-258 (LQEEDWEQEDKDE) are compositionally biased toward acidic residues. A compositionally biased stretch (polar residues) spans 268–277 (PSVQADSESL). Positions 283–393 (PDYLLQYRAI…LILEFEEKNR (111 aa)) constitute an OCEL domain.

It belongs to the ELL/occludin family. In terms of assembly, interacts with AFF4. Component of the super elongation complex (SEC), at least composed of EAF1, EAF2, CDK9, MLLT3/AF9, AFF (AFF1 or AFF4), the P-TEFb complex and ELL (ELL, ELL2 or ELL3). Component of the little elongation complex (LEC), at least composed of ELL (ELL, ELL2 or ELL3), ZC3H8, ICE1 and ICE2.

It localises to the nucleus. Functionally, enhancer-binding elongation factor that specifically binds enhancers in embryonic stem cells (ES cells), marks them, and is required for their future activation during stem cell specification. Elongation factor component of the super elongation complex (SEC), a complex required to increase the catalytic rate of RNA polymerase II transcription by suppressing transient pausing by the polymerase at multiple sites along the DNA. Component of the little elongation complex (LEC), a complex required to regulate small nuclear RNA (snRNA) gene transcription by RNA polymerase II and III. Does not only bind to enhancer regions of active genes, but also marks the enhancers that are in a poised or inactive state in ES cells and is required for establishing proper RNA polymerase II occupancy at developmentally regulated genes in a cohesin-dependent manner. Probably required for priming developmentally regulated genes for later recruitment of the super elongation complex (SEC), for transcriptional activation during differentiation. Required for recruitment of P-TEFb within SEC during differentiation. Probably preloaded on germ cell chromatin, suggesting that it may prime gene activation by marking enhancers as early as in the germ cells. Promoting epithelial-mesenchymal transition (EMT). This is RNA polymerase II elongation factor ELL3 (ELL3) from Bos taurus (Bovine).